Here is a 441-residue protein sequence, read N- to C-terminus: MAGQPEDPSLERHFKGHRDTVTTVDFNPNTKQLASGSMDSCLMIWNMKPQMRAYRFVGHKDAILSVDFSPSGHLIASASRDKTVRLWVPSVKGESTVFKAHTGTVRSVSFSGDGQSLVTASDDKTIKVWTVHRQKFLFSLNQHINWVRCAKFSPDGRLIVSASDDKTIKLWDKTSRECIHSFCEHGGFVNFVDFHPSGTCIAAAATDNTVKVWDIRMNKLIQHYQVHSGVVNSLSFHPSGNYLITASNDSTLKVLDLLEGRLLYTLHGHQGPVTSVKFSREGEFFASGGSDEQVMVWKTNFDSASYADLLKYRQHDQFLNGGDYTSGVPAADRHRPERNAQTDQADDLEPRHIQMSAKDRSSPLSYTSRSIDQHHPQAEDGNLRTVASTLEHIVGQLDILTRTVGILEQRLSLTEDKLKECIDNQQATVSLSHSATKTPSF.

WD repeat units follow at residues 16 to 55, 58 to 97, 100 to 139, 142 to 181, 184 to 223, 226 to 265, and 268 to 307; these read GHRD…RAYR, GHKD…ESTV, AHTG…FLFS, QHIN…CIHS, EHGG…LIQH, VHSG…LLYT, and GHQG…ASYA. The segment at 323 to 380 is disordered; sequence DYTSGVPAADRHRPERNAQTDQADDLEPRHIQMSAKDRSSPLSYTSRSIDQHHPQAED. Basic and acidic residues-rich tracts occupy residues 331–340, 348–361, and 371–380; these read ADRHRPERNA, LEPR…KDRS, and IDQHHPQAED. The stretch at 400 to 427 forms a coiled coil; it reads LTRTVGILEQRLSLTEDKLKECIDNQQA.

This sequence belongs to the WD repeat POC1 family. As to quaternary structure, interacts with pat.

It is found in the cytoplasm. It localises to the cytoskeleton. May play an important role in centriole assembly and/or stability and ciliogenesis. The protein is POC1 centriolar protein homolog A (poc1a) of Xenopus tropicalis (Western clawed frog).